We begin with the raw amino-acid sequence, 841 residues long: DNA mismatch repair protein MutS (841 aa).

596 to 603 (GPNMSGKS) contacts ATP.

Belongs to the DNA mismatch repair MutS family.

Its function is as follows. This protein is involved in the repair of mismatches in DNA. It is possible that it carries out the mismatch recognition step. This protein has a weak ATPase activity. In Acholeplasma laidlawii (strain PG-8A), this protein is DNA mismatch repair protein MutS.